A 455-amino-acid chain; its full sequence is Growth/differentiation factor 9 (455 aa).

Positions 1–24 (MALPNKFLLWFYCFAWLCFPVSLG) are cleaved as a signal peptide. Residues 25-320 (SQASGGDAQI…GRSSHHRHRR (296 aa)) constitute a propeptide that is removed on maturation. N-linked (GlcNAc...) asparagine glycans are attached at residues Asn-106, Asn-163, Asn-236, Asn-255, and Asn-269. Residues 305 to 328 (EDAAEDGRSSHHRHRRGQETVSSE) are disordered. The N-linked (GlcNAc...) asparagine glycan is linked to Asn-339. Cystine bridges form between Cys-354/Cys-420, Cys-383/Cys-452, and Cys-387/Cys-454.

It belongs to the TGF-beta family. As to quaternary structure, homodimer or heterodimer (Potential). But, in contrast to other members of this family, cannot be disulfide-linked. Phosphorylated; phosphorylation is critical for GDF9 function.

It is found in the secreted. Functionally, required for ovarian folliculogenesis. In Papio anubis (Olive baboon), this protein is Growth/differentiation factor 9 (GDF9).